The following is a 502-amino-acid chain: Glycerol kinase (502 aa).

Thr13 provides a ligand contact to ADP. ATP contacts are provided by Thr13, Thr14, and Ser15. Position 13 (Thr13) interacts with sn-glycerol 3-phosphate. Residue Arg17 coordinates ADP. 4 residues coordinate sn-glycerol 3-phosphate: Arg83, Glu84, Tyr136, and Asp246. Positions 83, 84, 136, 246, and 247 each coordinate glycerol. ADP is bound by residues Thr268 and Gly311. Residues Thr268, Gly311, Gln315, and Gly412 each contribute to the ATP site. ADP contacts are provided by Gly412 and Asn416.

It belongs to the FGGY kinase family.

The catalysed reaction is glycerol + ATP = sn-glycerol 3-phosphate + ADP + H(+). The protein operates within polyol metabolism; glycerol degradation via glycerol kinase pathway; sn-glycerol 3-phosphate from glycerol: step 1/1. Inhibited by fructose 1,6-bisphosphate (FBP). Functionally, key enzyme in the regulation of glycerol uptake and metabolism. Catalyzes the phosphorylation of glycerol to yield sn-glycerol 3-phosphate. The sequence is that of Glycerol kinase from Francisella tularensis subsp. tularensis (strain FSC 198).